The chain runs to 461 residues: Probable ornithine decarboxylase (461 aa).

Positions 1 to 35 (MTGTKRNGEEVVNENNNNNVAEETNKKAKVDESST) are disordered. Over residues 13–22 (NENNNNNVAE) the composition is skewed to low complexity. The segment covering 23-32 (ETNKKAKVDE) has biased composition (basic and acidic residues). The residue at position 116 (Lys-116) is an N6-(pyridoxal phosphate)lysine. Residues Ser-247, Gly-284, and 317-320 (EPGR) each bind pyridoxal 5'-phosphate. 375 to 376 (FD) serves as a coordination point for substrate. The active-site Proton donor; shared with dimeric partner is Cys-402. Asp-403 contacts substrate. A pyridoxal 5'-phosphate-binding site is contributed by Tyr-431.

Belongs to the Orn/Lys/Arg decarboxylase class-II family. In terms of assembly, homodimer. Only the dimer is catalytically active, as the active sites are constructed of residues from both monomers. It depends on pyridoxal 5'-phosphate as a cofactor.

It carries out the reaction L-ornithine + H(+) = putrescine + CO2. It functions in the pathway amine and polyamine biosynthesis; putrescine biosynthesis via L-ornithine pathway; putrescine from L-ornithine: step 1/1. With respect to regulation, inhibited by antizyme (AZ) in response to polyamine levels. AZ inhibits the assembly of the functional homodimer by binding to ODC monomers and targeting them for ubiquitin-independent proteolytic destruction by the 26S proteasome. In terms of biological role, catalyzes the first and rate-limiting step of polyamine biosynthesis that converts ornithine into putrescine, which is the precursor for the polyamines, spermidine and spermine. Polyamines are essential for cell proliferation and are implicated in cellular processes, ranging from DNA replication to apoptosis. The polypeptide is Probable ornithine decarboxylase (odc) (Dictyostelium discoideum (Social amoeba)).